The sequence spans 89 residues: Small ribosomal subunit protein uS15 (89 aa).

The protein belongs to the universal ribosomal protein uS15 family. Part of the 30S ribosomal subunit. Forms a bridge to the 50S subunit in the 70S ribosome, contacting the 23S rRNA.

One of the primary rRNA binding proteins, it binds directly to 16S rRNA where it helps nucleate assembly of the platform of the 30S subunit by binding and bridging several RNA helices of the 16S rRNA. Functionally, forms an intersubunit bridge (bridge B4) with the 23S rRNA of the 50S subunit in the ribosome. This chain is Small ribosomal subunit protein uS15, found in Shewanella putrefaciens (strain CN-32 / ATCC BAA-453).